Consider the following 249-residue polypeptide: MPSDRAATPKPSYKRILLKLSGEALMGDGKYGISPKTLSAIAGDVKDCVDLGVEVALTIGGGNIFRGVSGATEGMDRSSADYMGMLATVINAMALQDALEKIGVNTRVQSAIEMHQVAEPYIRRRAIRHLEKGRVVIFAAGTGNPYFTTDTAASLRAMEIHADVLLKATKVDGVYTDDPKKNPAATKFKQLSYIDVLKKNLKVMDSTAISLCMDNDLPIIVFDSTLRGNVRRVVLGEQIGTTVGRLEEK.

19-22 (KLSG) is an ATP binding site. Gly61 serves as a coordination point for UMP. The ATP site is built by Gly62 and Arg66. Residues Asp81 and 142 to 149 (TGNPYFTT) each bind UMP. Thr169, Tyr175, and Asp178 together coordinate ATP.

It belongs to the UMP kinase family. As to quaternary structure, homohexamer.

It localises to the cytoplasm. It catalyses the reaction UMP + ATP = UDP + ADP. Its pathway is pyrimidine metabolism; CTP biosynthesis via de novo pathway; UDP from UMP (UMPK route): step 1/1. Inhibited by UTP. Functionally, catalyzes the reversible phosphorylation of UMP to UDP. The protein is Uridylate kinase of Anaeromyxobacter sp. (strain Fw109-5).